Reading from the N-terminus, the 513-residue chain is Maturase K (513 aa).

Belongs to the intron maturase 2 family. MatK subfamily.

It localises to the plastid. The protein localises to the chloroplast. Usually encoded in the trnK tRNA gene intron. Probably assists in splicing its own and other chloroplast group II introns. The chain is Maturase K from Sporobolus indicus (Smut grass).